A 1132-amino-acid chain; its full sequence is Rho GTPase-activating protein gacE (1132 aa).

The Rho-GAP domain occupies 76–262; sequence LEMNKILKSE…FLISNYLNVF (187 aa). Disordered stretches follow at residues 279–354 and 472–517; these read NELL…SSPI and NSTT…SLIN. Low complexity predominate over residues 281–301; sequence LLNNNNNNNNVIMPTTTTTTT. Positions 302-311 are enriched in polar residues; sequence SASSSILPTD. Low complexity-rich tracts occupy residues 328–354, 473–498, and 507–517; these read SIPLSSIGSSSTSPIISPSSSSSSSPI, STTTTTTSTSTSTSTSTSTSTSSTTT, and SNSASNNSLIN.

Its subcellular location is the cytoplasm. In terms of biological role, rho GTPase-activating protein involved in the signal transduction pathway. This chain is Rho GTPase-activating protein gacE (gacE), found in Dictyostelium discoideum (Social amoeba).